Here is a 368-residue protein sequence, read N- to C-terminus: tRNA N6-adenosine threonylcarbamoyltransferase (368 aa).

Residues His108 and His112 each coordinate Fe cation. Residues 149–153 (LVSGG), Asp183, Gly196, Asp200, and Asn301 contribute to the substrate site. Asp329 lines the Fe cation pocket.

The protein belongs to the KAE1 / TsaD family. Fe(2+) is required as a cofactor.

It localises to the cytoplasm. The enzyme catalyses L-threonylcarbamoyladenylate + adenosine(37) in tRNA = N(6)-L-threonylcarbamoyladenosine(37) in tRNA + AMP + H(+). Its function is as follows. Required for the formation of a threonylcarbamoyl group on adenosine at position 37 (t(6)A37) in tRNAs that read codons beginning with adenine. Is involved in the transfer of the threonylcarbamoyl moiety of threonylcarbamoyl-AMP (TC-AMP) to the N6 group of A37, together with TsaE and TsaB. TsaD likely plays a direct catalytic role in this reaction. This chain is tRNA N6-adenosine threonylcarbamoyltransferase, found in Paenarthrobacter aurescens (strain TC1).